Here is a 622-residue protein sequence, read N- to C-terminus: Threonine--tRNA ligase (622 aa).

Positions M1–K134 are editing domain. The segment at P199–P498 is catalytic. Positions 291, 343, and 467 each coordinate Zn(2+).

It belongs to the class-II aminoacyl-tRNA synthetase family. Homodimer. The cofactor is Zn(2+).

The protein localises to the cytoplasm. The catalysed reaction is tRNA(Thr) + L-threonine + ATP = L-threonyl-tRNA(Thr) + AMP + diphosphate + H(+). Catalyzes the attachment of threonine to tRNA(Thr) in a two-step reaction: L-threonine is first activated by ATP to form Thr-AMP and then transferred to the acceptor end of tRNA(Thr). Also edits incorrectly charged L-seryl-tRNA(Thr). The chain is Threonine--tRNA ligase from Methanococcus vannielii (strain ATCC 35089 / DSM 1224 / JCM 13029 / OCM 148 / SB).